The following is a 275-amino-acid chain: Hydroxyethylthiazole kinase (275 aa).

Residue methionine 50 coordinates substrate. Residues arginine 126 and serine 171 each contribute to the ATP site. Alanine 200 contacts substrate.

It belongs to the Thz kinase family. It depends on Mg(2+) as a cofactor.

The catalysed reaction is 5-(2-hydroxyethyl)-4-methylthiazole + ATP = 4-methyl-5-(2-phosphooxyethyl)-thiazole + ADP + H(+). The protein operates within cofactor biosynthesis; thiamine diphosphate biosynthesis; 4-methyl-5-(2-phosphoethyl)-thiazole from 5-(2-hydroxyethyl)-4-methylthiazole: step 1/1. In terms of biological role, catalyzes the phosphorylation of the hydroxyl group of 4-methyl-5-beta-hydroxyethylthiazole (THZ). This is Hydroxyethylthiazole kinase from Acinetobacter baumannii (strain ACICU).